A 135-amino-acid polypeptide reads, in one-letter code: Transcription antitermination protein NusB (135 aa).

Belongs to the NusB family.

Functionally, involved in transcription antitermination. Required for transcription of ribosomal RNA (rRNA) genes. Binds specifically to the boxA antiterminator sequence of the ribosomal RNA (rrn) operons. The chain is Transcription antitermination protein NusB from Clostridium acetobutylicum (strain ATCC 824 / DSM 792 / JCM 1419 / IAM 19013 / LMG 5710 / NBRC 13948 / NRRL B-527 / VKM B-1787 / 2291 / W).